A 526-amino-acid polypeptide reads, in one-letter code: uncharacterized protein (526 aa).

WD repeat units lie at residues 210–248 (SMEQ…HHDT) and 452–491 (SHNS…LIDS).

This is an uncharacterized protein from Acanthamoeba polyphaga mimivirus (APMV).